The primary structure comprises 148 residues: MNHGGNSTMRHCSMKMTFNTDYDNLCIVFKSWHIGNLSQFLLSLLAIAILGYLFERLRSFTSLKETEFQRGYAGQQSEGLLTHHSKSLKSGRPFRLCALYAVQLVFSYFLMLVAMTYNAYVILAIAIGAAFGYRRSHCDTVQTVGLCH.

At 1–33 (MNHGGNSTMRHCSMKMTFNTDYDNLCIVFKSWH) the chain is on the extracellular side. Residues 34–54 (IGNLSQFLLSLLAIAILGYLF) traverse the membrane as a helical segment. Over 55–108 (ERLRSFTSLKETEFQRGYAGQQSEGLLTHHSKSLKSGRPFRLCALYAVQLVFSY) the chain is Cytoplasmic. Residues 109 to 129 (FLMLVAMTYNAYVILAIAIGA) form a helical membrane-spanning segment. The Extracellular segment spans residues 130–148 (AFGYRRSHCDTVQTVGLCH).

The protein belongs to the copper transporter (Ctr) (TC 1.A.56) family. SLC31A subfamily. As to quaternary structure, homotrimer.

It is found in the vacuole membrane. Its function is as follows. Mobilizes stored copper from the vacuole to the cytoplasm under conditions of copper limitation. This chain is Copper transport protein ctr6 (ctr6), found in Schizosaccharomyces pombe (strain 972 / ATCC 24843) (Fission yeast).